We begin with the raw amino-acid sequence, 253 residues long: Spermatogenesis-associated protein 9 (253 aa).

The helical transmembrane segment at 144-166 threads the bilayer; the sequence is LTSIMCASYAALIYLTVCVNAVL. The span at 210-228 shows a compositional bias: basic and acidic residues; sequence AKPYRSLPEKPDSISDRPK. The tract at residues 210–231 is disordered; it reads AKPYRSLPEKPDSISDRPKLPA.

The protein localises to the membrane. Functionally, may play at role in testicular development/spermatogenesis and may be an important factor in male infertility. The sequence is that of Spermatogenesis-associated protein 9 (SPATA9) from Bos taurus (Bovine).